We begin with the raw amino-acid sequence, 734 residues long: ATP-dependent RNA helicase DDX50 (734 aa).

Residues 1-131 form a disordered region; that stretch reads MPGKLLWGDI…KAEETLTREQ (131 aa). Residues 11–20 show a composition bias toward acidic residues; that stretch reads MELEAPLEES. Basic and acidic residues-rich tracts occupy residues 38–51 and 67–86; these read HSESEERTETRENG and REKLNGDTKEGLRFSDEFSP. A phosphoserine mark is found at Ser-41, Ser-81, Ser-85, Ser-113, Ser-119, and Ser-120. Over residues 115-131 the composition is skewed to basic and acidic residues; sequence NSHKSSDKAEETLTREQ. Lys-122 is covalently cross-linked (Glycyl lysine isopeptide (Lys-Gly) (interchain with G-Cter in SUMO2)). Positions 134–162 match the Q motif motif; it reads GAFSNFSISEETIKLLKGRGVTYLFPIQV. The Helicase ATP-binding domain maps to 165–344; that stretch reads FGPVYEGKDL…KKYMKSRYEQ (180 aa). Residue 178 to 185 participates in ATP binding; that stretch reads ARTGTGKT. Phosphothreonine is present on Thr-244. The short motif at 287–290 is the DEVD box element; that stretch reads DEVD. The 145-residue stretch at 377–521 folds into the Helicase C-terminal domain; that stretch reads DVLQVYSGSE…GVPSTMDLVK (145 aa). Residue Ser-515 is modified to Phosphoserine. Residues 664–734 are disordered; it reads YYDGNTSSNP…RSGGHKRNFD (71 aa). Over residues 679–698 the composition is skewed to gly residues; that stretch reads WSGGRSGRSGRSGGRSGGRS. The segment covering 699 to 709 has biased composition (low complexity); it reads GRQSRQGSRSG. Residues 717-734 are compositionally biased toward basic residues; it reads RSGNRNRSRSGGHKRNFD.

Belongs to the DEAD box helicase family. DDX21/DDX50 subfamily. Interacts with C1QBP. Interacts with the ubiquitin ligase CTLH complex through GID4. Interacts with TICAM1.

Its subcellular location is the nucleus. It localises to the nucleolus. The protein resides in the cytoplasm. It carries out the reaction ATP + H2O = ADP + phosphate + H(+). Functionally, ATP-dependent RNA helicase that may play a role in various aspects of RNA metabolism including pre-mRNA splicing or ribosomal RNA production. Also acts as a viral restriction factor and promotes the activation of the NF-kappa-B and IRF3 signaling pathways following its stimulation with viral RNA or infection with RNA and DNA viruses. For instance, decreases vaccinia virus, herpes simplex virus, Zika virus or dengue virus replication during the early stage of infection. Mechanistically, acts via the adapter TICAM1 and independently of the DDX1-DDX21-DHX36 helicase complex to induce the production of interferon-beta. This Mus musculus (Mouse) protein is ATP-dependent RNA helicase DDX50 (Ddx50).